The following is a 185-amino-acid chain: Ribosome-recycling factor (185 aa).

Belongs to the RRF family.

The protein localises to the cytoplasm. In terms of biological role, responsible for the release of ribosomes from messenger RNA at the termination of protein biosynthesis. May increase the efficiency of translation by recycling ribosomes from one round of translation to another. This chain is Ribosome-recycling factor, found in Salmonella paratyphi A (strain ATCC 9150 / SARB42).